We begin with the raw amino-acid sequence, 154 residues long: Anti-sigma-E factor RseA (154 aa).

Position 39 is a phosphothreonine; by PknB (Thr-39). Residues His-66, Cys-70, and Cys-73 each coordinate Zn(2+). Residues Ser-104–Arg-154 form a disordered region. Positions Gln-124–Asp-136 are enriched in low complexity.

This sequence belongs to the zinc-associated anti-sigma factor (ZAS) superfamily. In terms of assembly, interacts with cognate ECF RNA polymerase sigma factor SigE under reducing conditions; this inhibits the interaction of SigE with the RNA polymerase catalytic core. Requires Zn(2+) as cofactor. Phosphorylated by PknB on Thr-39; can be dephosphorylated (at least in vitro) by PstP. Phosphorylation is the signal for subsequent degradation by the ClpC1-ClpP2 complex. In terms of processing, degraded following vancomycin treatment (surface stress) by a ClpC1-ClpP2 complex.

The protein resides in the cytoplasm. An anti-sigma factor for extracytoplasmic function (ECF) sigma factor SigE. ECF sigma factors are held in an inactive form by an anti-sigma factor. This Mycobacterium tuberculosis (strain ATCC 25618 / H37Rv) protein is Anti-sigma-E factor RseA (rseA).